A 729-amino-acid polypeptide reads, in one-letter code: Fatty acid oxidation complex subunit alpha (729 aa).

The segment at 1–189 is enoyl-CoA hydratase/isomerase; that stretch reads MLYKGDTLYL…KIGLVDGVVK (189 aa). Asp296 lines the substrate pocket. The 3-hydroxyacyl-CoA dehydrogenase stretch occupies residues 311-729; sequence ETPKHAAVLG…ARPVGELKTA (419 aa). Residues Met324, Asp343, 400–402, Lys407, and Ser429 contribute to the NAD(+) site; that span reads VVE. His450 (for 3-hydroxyacyl-CoA dehydrogenase activity) is an active-site residue. Residue Asn453 participates in NAD(+) binding. 2 residues coordinate substrate: Asn500 and Tyr660.

The protein in the N-terminal section; belongs to the enoyl-CoA hydratase/isomerase family. In the C-terminal section; belongs to the 3-hydroxyacyl-CoA dehydrogenase family. In terms of assembly, heterotetramer of two alpha chains (FadB) and two beta chains (FadA).

It carries out the reaction a (3S)-3-hydroxyacyl-CoA + NAD(+) = a 3-oxoacyl-CoA + NADH + H(+). The catalysed reaction is a (3S)-3-hydroxyacyl-CoA = a (2E)-enoyl-CoA + H2O. The enzyme catalyses a 4-saturated-(3S)-3-hydroxyacyl-CoA = a (3E)-enoyl-CoA + H2O. It catalyses the reaction (3S)-3-hydroxybutanoyl-CoA = (3R)-3-hydroxybutanoyl-CoA. It carries out the reaction a (3Z)-enoyl-CoA = a 4-saturated (2E)-enoyl-CoA. The catalysed reaction is a (3E)-enoyl-CoA = a 4-saturated (2E)-enoyl-CoA. Its pathway is lipid metabolism; fatty acid beta-oxidation. Functionally, involved in the aerobic and anaerobic degradation of long-chain fatty acids via beta-oxidation cycle. Catalyzes the formation of 3-oxoacyl-CoA from enoyl-CoA via L-3-hydroxyacyl-CoA. It can also use D-3-hydroxyacyl-CoA and cis-3-enoyl-CoA as substrate. The protein is Fatty acid oxidation complex subunit alpha of Enterobacter cloacae.